A 238-amino-acid polypeptide reads, in one-letter code: 2,3,4,5-tetrahydropyridine-2,6-dicarboxylate N-acetyltransferase (238 aa).

This sequence belongs to the transferase hexapeptide repeat family. DapH subfamily.

It catalyses the reaction (S)-2,3,4,5-tetrahydrodipicolinate + acetyl-CoA + H2O = L-2-acetamido-6-oxoheptanedioate + CoA. It functions in the pathway amino-acid biosynthesis; L-lysine biosynthesis via DAP pathway; LL-2,6-diaminopimelate from (S)-tetrahydrodipicolinate (acetylase route): step 1/3. In terms of biological role, catalyzes the transfer of an acetyl group from acetyl-CoA to tetrahydrodipicolinate. In Pseudothermotoga lettingae (strain ATCC BAA-301 / DSM 14385 / NBRC 107922 / TMO) (Thermotoga lettingae), this protein is 2,3,4,5-tetrahydropyridine-2,6-dicarboxylate N-acetyltransferase.